Reading from the N-terminus, the 248-residue chain is tRNA (guanine-N(1)-)-methyltransferase (248 aa).

S-adenosyl-L-methionine-binding positions include Gly-117 and 137 to 142 (IGDFVL).

Belongs to the RNA methyltransferase TrmD family. As to quaternary structure, homodimer.

It is found in the cytoplasm. It carries out the reaction guanosine(37) in tRNA + S-adenosyl-L-methionine = N(1)-methylguanosine(37) in tRNA + S-adenosyl-L-homocysteine + H(+). Specifically methylates guanosine-37 in various tRNAs. The protein is tRNA (guanine-N(1)-)-methyltransferase of Polynucleobacter necessarius subsp. necessarius (strain STIR1).